We begin with the raw amino-acid sequence, 96 residues long: Non-specific lipid-transfer protein 2 (96 aa).

The N-terminal stretch at 1–27 (MMRRLAVLVLAVAMVAACGGGVVGVAG) is a signal peptide. Cystine bridges form between cysteine 30/cysteine 62, cysteine 38/cysteine 52, cysteine 53/cysteine 88, and cysteine 64/cysteine 95.

The protein belongs to the plant LTP family. B11E subfamily.

Transfer lipids across membranes. May play a role in plant defense or in the biosynthesis of cuticle layers. This chain is Non-specific lipid-transfer protein 2 (LTP-2), found in Oryza sativa subsp. indica (Rice).